Consider the following 450-residue polypeptide: 3-phosphoshikimate 1-carboxyvinyltransferase (450 aa).

Lysine 23, serine 24, and arginine 28 together coordinate 3-phosphoshikimate. Lysine 23 is a binding site for phosphoenolpyruvate. Residues glycine 96 and arginine 124 each coordinate phosphoenolpyruvate. 3-phosphoshikimate is bound by residues serine 167, serine 168, glutamine 169, serine 196, glutamate 311, and histidine 340. Position 169 (glutamine 169) interacts with phosphoenolpyruvate. Glutamate 311 acts as the Proton acceptor in catalysis. Arginine 344, arginine 385, and lysine 410 together coordinate phosphoenolpyruvate. Residues 426-450 (GQGWGYPQPRSGQRARRATGQGSGG) are disordered.

It belongs to the EPSP synthase family. As to quaternary structure, monomer.

The protein localises to the cytoplasm. It catalyses the reaction 3-phosphoshikimate + phosphoenolpyruvate = 5-O-(1-carboxyvinyl)-3-phosphoshikimate + phosphate. It participates in metabolic intermediate biosynthesis; chorismate biosynthesis; chorismate from D-erythrose 4-phosphate and phosphoenolpyruvate: step 6/7. Functionally, catalyzes the transfer of the enolpyruvyl moiety of phosphoenolpyruvate (PEP) to the 5-hydroxyl of shikimate-3-phosphate (S3P) to produce enolpyruvyl shikimate-3-phosphate and inorganic phosphate. The chain is 3-phosphoshikimate 1-carboxyvinyltransferase from Mycobacterium tuberculosis (strain ATCC 25177 / H37Ra).